Consider the following 483-residue polypeptide: Glutamyl-tRNA(Gln) amidotransferase subunit A (483 aa).

Catalysis depends on charge relay system residues K75 and S150. The active-site Acyl-ester intermediate is S174.

It belongs to the amidase family. GatA subfamily. In terms of assembly, heterotrimer of A, B and C subunits.

It carries out the reaction L-glutamyl-tRNA(Gln) + L-glutamine + ATP + H2O = L-glutaminyl-tRNA(Gln) + L-glutamate + ADP + phosphate + H(+). Allows the formation of correctly charged Gln-tRNA(Gln) through the transamidation of misacylated Glu-tRNA(Gln) in organisms which lack glutaminyl-tRNA synthetase. The reaction takes place in the presence of glutamine and ATP through an activated gamma-phospho-Glu-tRNA(Gln). The polypeptide is Glutamyl-tRNA(Gln) amidotransferase subunit A (Legionella pneumophila subsp. pneumophila (strain Philadelphia 1 / ATCC 33152 / DSM 7513)).